A 180-amino-acid polypeptide reads, in one-letter code: MENFFNQFFENIGEDKNREGLKNTPKRVQELWNFLYKGYKEDPKVALKSAYFQGVCDEMIVAQHIEFYSTCEHHLLPFFGNISLGYIPKEKIIGISAIAKLIEIYSKRLQIQERLTTQIAETFDEIIEPRGVIVICEAKHLCMSMQGVQKQNAIIKTSALKGLFKKDPKTRAEFMQLLKS.

Cys-71, His-74, and Cys-142 together coordinate Zn(2+).

This sequence belongs to the GTP cyclohydrolase I family. As to quaternary structure, toroid-shaped homodecamer, composed of two pentamers of five dimers.

The catalysed reaction is GTP + H2O = 7,8-dihydroneopterin 3'-triphosphate + formate + H(+). It participates in cofactor biosynthesis; 7,8-dihydroneopterin triphosphate biosynthesis; 7,8-dihydroneopterin triphosphate from GTP: step 1/1. In Helicobacter acinonychis (strain Sheeba), this protein is GTP cyclohydrolase 1.